Here is a 114-residue protein sequence, read N- to C-terminus: MTAKGLRRIKIKKRIRKYIFGTAERPRLTVFRSNRQIYSQLIDDSTGNTLVVASSLGITEKVSKKKIAYRTGVLVAQKAKEVGIRSVVFDRNGYLYHGRVKELADAAREEGLKF.

The protein belongs to the universal ribosomal protein uL18 family. As to quaternary structure, part of the 50S ribosomal subunit; part of the 5S rRNA/L5/L18/L25 subcomplex. Contacts the 5S and 23S rRNAs.

In terms of biological role, this is one of the proteins that bind and probably mediate the attachment of the 5S RNA into the large ribosomal subunit, where it forms part of the central protuberance. This is Large ribosomal subunit protein uL18 from Azobacteroides pseudotrichonymphae genomovar. CFP2.